We begin with the raw amino-acid sequence, 236 residues long: UPF0502 protein BceJ2315_62050 (236 aa).

It belongs to the UPF0502 family.

This chain is UPF0502 protein BceJ2315_62050, found in Burkholderia cenocepacia (strain ATCC BAA-245 / DSM 16553 / LMG 16656 / NCTC 13227 / J2315 / CF5610) (Burkholderia cepacia (strain J2315)).